Reading from the N-terminus, the 189-residue chain is Ras-like protein rasG (189 aa).

10–17 lines the GTP pocket; it reads GGGGVGKS. The Effector region signature appears at 32-40; it reads YDPTIEDSY. Residues 57-61 and 116-119 contribute to the GTP site; these read DTAGQ and NKCD. Positions 169–189 are disordered; it reads KGDSKPEKGKKKRPLKACTLL. C186 is subject to Cysteine methyl ester. C186 carries S-geranylgeranyl cysteine lipidation. Positions 187-189 are cleaved as a propeptide — removed in mature form; the sequence is TLL.

It belongs to the small GTPase superfamily. Ras family. Interacts with ripA.

It localises to the cell membrane. The enzyme catalyses GTP + H2O = GDP + phosphate + H(+). Alternates between an inactive form bound to GDP and an active form bound to GTP. Activated by a guanine nucleotide-exchange factor (GEF) and inactivated by a GTPase-activating protein (GAP). In terms of biological role, ras proteins bind GDP/GTP and possess intrinsic GTPase activity. The sequence is that of Ras-like protein rasG (rasG) from Dictyostelium discoideum (Social amoeba).